The primary structure comprises 557 residues: CDP-diacylglycerol--glycerol-3-phosphate 3-phosphatidyltransferase, mitochondrial (557 aa).

Residues Met1–Ala25 constitute a mitochondrion transit peptide. Position 121–128 (Ala121–Gly128) interacts with ATP. One can recognise a PLD phosphodiesterase 1 domain in the interval Thr212–Tyr238. Active-site residues include His217, Lys219, and Asp224. Positions Thr322–Pro346 are disordered. Residues Phe323–Leu333 show a composition bias toward polar residues. The span at His336–Pro346 shows a compositional bias: basic and acidic residues. The region spanning Ala461–Ser494 is the PLD phosphodiesterase 2 domain.

Belongs to the CDP-alcohol phosphatidyltransferase class-II family.

The protein localises to the mitochondrion. The catalysed reaction is a CDP-1,2-diacyl-sn-glycerol + sn-glycerol 3-phosphate = a 1,2-diacyl-sn-glycero-3-phospho-(1'-sn-glycero-3'-phosphate) + CMP + H(+). Its pathway is phospholipid metabolism; phosphatidylglycerol biosynthesis; phosphatidylglycerol from CDP-diacylglycerol: step 1/2. Activated by calcium and magnesium and inhibited by other bivalent cations. Its function is as follows. Functions in the biosynthesis of the anionic phospholipids phosphatidylglycerol and cardiolipin. This Gallus gallus (Chicken) protein is CDP-diacylglycerol--glycerol-3-phosphate 3-phosphatidyltransferase, mitochondrial (PGS1).